A 258-amino-acid chain; its full sequence is Imidazole glycerol phosphate synthase subunit HisF (258 aa).

Active-site residues include D12 and D131.

This sequence belongs to the HisA/HisF family. As to quaternary structure, heterodimer of HisH and HisF.

The protein localises to the cytoplasm. It catalyses the reaction 5-[(5-phospho-1-deoxy-D-ribulos-1-ylimino)methylamino]-1-(5-phospho-beta-D-ribosyl)imidazole-4-carboxamide + L-glutamine = D-erythro-1-(imidazol-4-yl)glycerol 3-phosphate + 5-amino-1-(5-phospho-beta-D-ribosyl)imidazole-4-carboxamide + L-glutamate + H(+). It participates in amino-acid biosynthesis; L-histidine biosynthesis; L-histidine from 5-phospho-alpha-D-ribose 1-diphosphate: step 5/9. Functionally, IGPS catalyzes the conversion of PRFAR and glutamine to IGP, AICAR and glutamate. The HisF subunit catalyzes the cyclization activity that produces IGP and AICAR from PRFAR using the ammonia provided by the HisH subunit. This is Imidazole glycerol phosphate synthase subunit HisF from Nocardioides sp. (strain ATCC BAA-499 / JS614).